The sequence spans 81 residues: ATP synthase subunit c, chloroplastic (81 aa).

2 helical membrane-spanning segments follow: residues 3–23 (PLISSASVIAAGLAVGLASIG) and 57–77 (LAFMEALTIYGLVVALALLFA).

It belongs to the ATPase C chain family. As to quaternary structure, F-type ATPases have 2 components, F(1) - the catalytic core - and F(0) - the membrane proton channel. F(1) has five subunits: alpha(3), beta(3), gamma(1), delta(1), epsilon(1). F(0) has four main subunits: a(1), b(1), b'(1) and c(10-14). The alpha and beta chains form an alternating ring which encloses part of the gamma chain. F(1) is attached to F(0) by a central stalk formed by the gamma and epsilon chains, while a peripheral stalk is formed by the delta, b and b' chains.

It localises to the plastid. It is found in the chloroplast thylakoid membrane. F(1)F(0) ATP synthase produces ATP from ADP in the presence of a proton or sodium gradient. F-type ATPases consist of two structural domains, F(1) containing the extramembraneous catalytic core and F(0) containing the membrane proton channel, linked together by a central stalk and a peripheral stalk. During catalysis, ATP synthesis in the catalytic domain of F(1) is coupled via a rotary mechanism of the central stalk subunits to proton translocation. In terms of biological role, key component of the F(0) channel; it plays a direct role in translocation across the membrane. A homomeric c-ring of between 10-14 subunits forms the central stalk rotor element with the F(1) delta and epsilon subunits. This Ceratophyllum demersum (Rigid hornwort) protein is ATP synthase subunit c, chloroplastic.